Consider the following 262-residue polypeptide: Demethyldecarbamoylnovobiocin O-methyltransferase (262 aa).

An S-adenosyl-L-methionine-binding site is contributed by 64–65 (TM). Residue E72 is the Proton acceptor of the active site. Residues 92–96 (ETGVW), 122–126 (DSFQG), F178, 196–197 (DG), and S202 contribute to the S-adenosyl-L-methionine site. D196 lines the Mg(2+) pocket. D223 and D224 together coordinate Mg(2+).

This sequence belongs to the methyltransferase TylF/MycF family. As to quaternary structure, homodimer. Requires Mg(2+) as cofactor.

It catalyses the reaction desmethyldescarbamoylnovobiocin + S-adenosyl-L-methionine = descarbamoylnovobiocin + S-adenosyl-L-homocysteine + H(+). Its pathway is antibiotic biosynthesis; novobiocin biosynthesis. Functionally, S-adenosyl-L-methionine-dependent O-methyltransferase that methylates at 4-OH of the noviose moiety, the penultimate step in the novobiocin biosynthesis pathway. Novobiocin is an aminocoumarin family antibiotic that targets bacterial DNA gyrases. This chain is Demethyldecarbamoylnovobiocin O-methyltransferase (novP), found in Streptomyces niveus (Streptomyces spheroides).